The primary structure comprises 713 residues: Nucleoporin NUP82 (713 aa).

The interval 1–409 (MSQSSRLSAL…SDLNPLAGLK (409 aa)) is interaction with NUP116. The interval 463–713 (TSISTEKSDT…VSQEFTTKTQ (251 aa)) is interaction with NSP1 and NUP159. The stretch at 582–713 (EAQNKKWDAQ…VSQEFTTKTQ (132 aa)) forms a coiled coil. Positions 607–623 (KKLSQIAESNKFKEKKI) match the Bipartite nuclear localization signal motif.

Component of the nuclear pore complex (NPC). NPC constitutes the exclusive means of nucleocytoplasmic transport. NPCs allow the passive diffusion of ions and small molecules and the active, nuclear transport receptor-mediated bidirectional transport of macromolecules such as proteins, RNAs, ribonucleoparticles (RNPs), and ribosomal subunits across the nuclear envelope. Due to its 8-fold rotational symmetry, all subunits are present with 8 copies or multiples thereof. NUP82 is part of the NUP82 subcomplex. This subcomplex is the base for interactions with NUP116 and GLE2, with NUP42 and GLE1 and with DYN2.

The protein localises to the nucleus. Its subcellular location is the nuclear pore complex. It localises to the nucleus membrane. Functionally, functions as a component of the nuclear pore complex (NPC). NPC components, collectively referred to as nucleoporins (NUPs), can play the role of both NPC structural components and of docking or interaction partners for transiently associated nuclear transport factors. It is specifically involved as part of the NUP82-NUP159-NSP1 subcomplex in nuclear mRNA and pre-ribosome export by acting as a linker tethering nucleoporins that are directly involved in nuclear transport to the NPC via its coiled-coil domain. The chain is Nucleoporin NUP82 (NUP82) from Saccharomyces cerevisiae (strain ATCC 204508 / S288c) (Baker's yeast).